We begin with the raw amino-acid sequence, 388 residues long: S-adenosylmethionine synthase (388 aa).

Residue histidine 17 coordinates ATP. Position 19 (aspartate 19) interacts with Mg(2+). A K(+)-binding site is contributed by glutamate 45. Glutamate 58 and glutamine 102 together coordinate L-methionine. The segment at 102 to 112 (QSADIAQGVDA) is flexible loop. ATP is bound by residues 167-169 (DSK), 232-233 (RF), aspartate 241, 247-248 (RK), alanine 264, and lysine 268. Residue aspartate 241 coordinates L-methionine. Lysine 272 contacts L-methionine.

It belongs to the AdoMet synthase family. Homotetramer; dimer of dimers. Mg(2+) serves as cofactor. The cofactor is K(+).

The protein localises to the cytoplasm. The enzyme catalyses L-methionine + ATP + H2O = S-adenosyl-L-methionine + phosphate + diphosphate. The protein operates within amino-acid biosynthesis; S-adenosyl-L-methionine biosynthesis; S-adenosyl-L-methionine from L-methionine: step 1/1. Catalyzes the formation of S-adenosylmethionine (AdoMet) from methionine and ATP. The overall synthetic reaction is composed of two sequential steps, AdoMet formation and the subsequent tripolyphosphate hydrolysis which occurs prior to release of AdoMet from the enzyme. This Paramagnetospirillum magneticum (strain ATCC 700264 / AMB-1) (Magnetospirillum magneticum) protein is S-adenosylmethionine synthase.